A 370-amino-acid polypeptide reads, in one-letter code: Cytochrome b (370 aa).

The next 4 membrane-spanning stretches (helical) occupy residues 30-50 (FGSM…FLAF), 74-96 (WIFR…LHIF), 109-129 (VWMS…MGYV), and 175-195 (FFVL…GHLI). Heme b-binding residues include His-80 and His-94. Heme b contacts are provided by His-179 and His-193. His-198 contacts a ubiquinone. The next 4 helical transmembrane spans lie at 221–240 (YIGK…VLSL), 284–304 (VLGV…ALVN), 316–336 (FLVF…QCMV), and 342–362 (VLSP…LGIF).

The protein belongs to the cytochrome b family. In terms of assembly, the main subunits of complex b-c1 are: cytochrome b, cytochrome c1 and the Rieske protein. It depends on heme b as a cofactor.

It is found in the mitochondrion inner membrane. In terms of biological role, component of the ubiquinol-cytochrome c reductase complex (complex III or cytochrome b-c1 complex) that is part of the mitochondrial respiratory chain. The b-c1 complex mediates electron transfer from ubiquinol to cytochrome c. Contributes to the generation of a proton gradient across the mitochondrial membrane that is then used for ATP synthesis. The polypeptide is Cytochrome b (ctb-1) (Caenorhabditis briggsae).